We begin with the raw amino-acid sequence, 339 residues long: HTH-type transcriptional regulator PtxS (339 aa).

One can recognise an HTH lacI-type domain in the interval 12–67 (VTISEVARVAGVSKATVSRYIGGDRQLLAEATAKRLEEVIERLGYRPNQMARGLKR). Positions 14–33 (ISEVARVAGVSKATVSRYIG) form a DNA-binding region, H-T-H motif.

As to quaternary structure, homodimer in solution.

With respect to regulation, 2-ketogluconate acts as a molecular effector and causes dissociation of PtxS from its target promoter. In terms of biological role, negatively regulates glucose metabolism by binding directly to the promoter region of the kgu and gad operons. It also negatively regulates its own synthesis. The polypeptide is HTH-type transcriptional regulator PtxS (Pseudomonas putida (strain ATCC 47054 / DSM 6125 / CFBP 8728 / NCIMB 11950 / KT2440)).